We begin with the raw amino-acid sequence, 172 residues long: Protein-export protein SecB (172 aa).

The interval 152-172 (AQGAEGGNSGIVMPDGSQARH) is disordered.

It belongs to the SecB family. In terms of assembly, homotetramer, a dimer of dimers. One homotetramer interacts with 1 SecA dimer.

It localises to the cytoplasm. One of the proteins required for the normal export of preproteins out of the cell cytoplasm. It is a molecular chaperone that binds to a subset of precursor proteins, maintaining them in a translocation-competent state. It also specifically binds to its receptor SecA. The protein is Protein-export protein SecB of Cupriavidus necator (strain ATCC 17699 / DSM 428 / KCTC 22496 / NCIMB 10442 / H16 / Stanier 337) (Ralstonia eutropha).